The chain runs to 1529 residues: Protein STU1 (1529 aa).

4 disordered regions span residues 266-314, 617-638, 651-745, and 1070-1090; these read SMGR…DEQI, KPRTITSRNQPSTLSSLTARKA, KELR…SQGI, and SANDTGFRTPPKLAGNHTSPI. Residues 273–290 show a composition bias toward low complexity; it reads TISSNSSTPASLSSSTMS. Composition is skewed to polar residues over residues 295–308 and 619–634; these read RTNFHNYTKSISPS and RTITSRNQPSTLSSLT. A compositionally biased stretch (low complexity) spans 660 to 674; that stretch reads TSISRPSSRINSTSS. Residues 708 to 723 are compositionally biased toward polar residues; sequence TPSTSSLSRVESNQDA.

Belongs to the CLASP family. Interacts with microtubules.

The protein resides in the cytoplasm. It is found in the cytoskeleton. The protein localises to the nucleus. It localises to the spindle. Microtubule binding protein that promotes the stabilization of dynamic microtubules. Required for mitotic spindle formation. The sequence is that of Protein STU1 (STU1) from Debaryomyces hansenii (strain ATCC 36239 / CBS 767 / BCRC 21394 / JCM 1990 / NBRC 0083 / IGC 2968) (Yeast).